A 238-amino-acid chain; its full sequence is Large ribosomal subunit protein uL1 (238 aa).

The protein belongs to the universal ribosomal protein uL1 family. In terms of assembly, part of the 50S ribosomal subunit.

Functionally, binds directly to 23S rRNA. The L1 stalk is quite mobile in the ribosome, and is involved in E site tRNA release. Protein L1 is also a translational repressor protein, it controls the translation of the L11 operon by binding to its mRNA. The polypeptide is Large ribosomal subunit protein uL1 (Rickettsia prowazekii (strain Madrid E)).